We begin with the raw amino-acid sequence, 89 residues long: Chromosomal protein MC1a (89 aa).

Functionally, protects DNA against thermal denaturation and modulates transcription. In Methanothrix soehngenii (Methanosaeta concilii), this protein is Chromosomal protein MC1a.